Consider the following 944-residue polypeptide: MDEASHLPNGSLKNMEFTPVGFIKSKRNTTQTQVVSPTKVPNANNGDENEGPVKKRQRRSIDDTIDSTRLFSEASQFDDSFPEIKANIPPSPRSGNVDKSRKRNLIDDLKKDVPMSQPLKEQEVREHQMKKERFDRALESKLLGKRHITYANSDISNKELYINEIKSLKHEIKELRKEKNDTLNNYDTLEEETDDLKNRLQALEKELDAKNKIVNSRKVDDHSGCIEEREQMERKLAELERKLKTVKDQVLELENNSDVQSLKLRSKEDELKNLMNELNELKSNAEEKDTQLEFKKNELRKRTIELNELKIKSDEMDLQLKQKQNESKRLKDELNELETKFSENGSQSSAKENELKMLKNKIAELEEEISTKNSQLIAKEGKLASLMAQLTQLESKLNQRDSQLGSREEELKKTNDKLQKDIRIAREETVSKDERITDLQKKVKQLENDLFVIKKTHSESKTITDNELESKDKLIKILENDLKVAQEKYSKMEKELKEREFNYKISESKLEDEKTTLNEKISNLAAENSQLKNKIEDNSTATHHMKENYEKQLESLRKDIEEYKESAKDSEDKIEELKIRIAENSAKVSEKRSKDIKQKDEQISDLTQNLKLQEDEISSLKSIIDRYKKDFNQLKSEQSNIQHDLNLQILNLENKLIESEDELKSLRDSQKIEIENWKRKYNNLSLENDRLLTEKESASDKEREISILNRKLDEMDKEKWNLQESKEKYKRELQKVITANDRLRREKEELNENSNNIRIMEDKMTRIKKNYLSEITSLQEENRRLEERLILNERRKDNDSTMQLNDIISYYKLKYHSEVRHNNDLKVINDYLNKVLALGTRRLRLDTRKGEHSLNISLPDDDELDRDYYNSHVYTRYHDYEYPLRFNLNRRGPYFERRLSFKTVALLVLACVRMKRIAFYRRSDDNRLRILRDRIESSSGRISW.

At Thr-18 the chain carries Phosphothreonine. Residues 23-110 (IKSKRNTTQT…RKRNLIDDLK (88 aa)) are disordered. The segment covering 28–46 (NTTQTQVVSPTKVPNANNG) has biased composition (polar residues). The short motif at 54–59 (KKRQRR) is the Nuclear localization signal element. The residue at position 60 (Ser-60) is a Phosphoserine; by MPS1. Thr-64 and Thr-68 each carry phosphothreonine; by MPS1. A compositionally biased stretch (polar residues) spans 67-78 (STRLFSEASQFD). Residue Ser-80 is modified to Phosphoserine. Over residues 96 to 110 (NVDKSRKRNLIDDLK) the composition is skewed to basic and acidic residues. Residues 119–799 (LKEQEVREHQ…ILNERRKDND (681 aa)) adopt a coiled-coil conformation. Ser-529 carries the phosphoserine modification. 2 short sequence motifs (nuclear localization signal) span residues 726–731 (KEKYKR) and 742–747 (RLRREK). Residues 900 to 927 (SFKTVALLVLACVRMKRIAFYRRSDDNR) are calmodulin-binding.

The protein belongs to the SPC110 family. In terms of assembly, homodimer. Component of the SPC110 complex containing at least CMD1, SPC29 and SCP110. Interacts with SPC97 and SPC98.

The protein localises to the nucleus. Its subcellular location is the cytoplasm. The protein resides in the cytoskeleton. It localises to the microtubule organizing center. It is found in the spindle pole body. Functionally, component of the spindle pole body (SPB) required for the proper execution of spindle pole body (SPB) duplication. Potential role in cross-linking filaments or anchoring other molecules. It is essential for growth. In Saccharomyces cerevisiae (strain Lalvin EC1118 / Prise de mousse) (Baker's yeast), this protein is Spindle pole body component 110 (SPC110).